The primary structure comprises 214 residues: MHTVKLLCVVFSCLCAVAWASSHRQPCHSPPLTSGTMKVVSTGGHDLASGEFSYDSKASKFRFVEDTHANKTSHMDVLIHFEEGTLYEIDSKNESCKKETLQFRKHLMEIPPDATHESEIYMGSPTVIEQGLRVRVWHGKLPELHAHYSLSTTSCGCLPVSGSFYGKKKDLLFSFFGVEPEVDDPQAFVPPAYCEGVSFEEAPDDHSFFDLFHD.

A signal peptide spans 1–20 (MHTVKLLCVVFSCLCAVAWA). N-linked (GlcNAc...) asparagine glycosylation is found at Asn70 and Asn93.

This sequence belongs to the ependymin family. In terms of assembly, forms disulfide-linked dimers. Binds calcium through the terminal sialic acids.

Its subcellular location is the secreted. Functionally, may play a role in neural plasticity. May be involved during axon regeneration. The chain is Ependymin (epd) from Notemigonus crysoleucas (Golden shiner).